The following is a 553-amino-acid chain: Dihydroxy-acid dehydratase (553 aa).

Residue aspartate 78 coordinates Mg(2+). [2Fe-2S] cluster is bound at residue cysteine 119. Mg(2+) is bound by residues aspartate 120 and lysine 121. Lysine 121 is subject to N6-carboxylysine. Residue cysteine 193 participates in [2Fe-2S] cluster binding. A Mg(2+)-binding site is contributed by glutamate 441. Residue serine 467 is the Proton acceptor of the active site.

The protein belongs to the IlvD/Edd family. As to quaternary structure, homodimer. Requires [2Fe-2S] cluster as cofactor. Mg(2+) serves as cofactor.

The enzyme catalyses (2R)-2,3-dihydroxy-3-methylbutanoate = 3-methyl-2-oxobutanoate + H2O. The catalysed reaction is (2R,3R)-2,3-dihydroxy-3-methylpentanoate = (S)-3-methyl-2-oxopentanoate + H2O. The protein operates within amino-acid biosynthesis; L-isoleucine biosynthesis; L-isoleucine from 2-oxobutanoate: step 3/4. It functions in the pathway amino-acid biosynthesis; L-valine biosynthesis; L-valine from pyruvate: step 3/4. Functions in the biosynthesis of branched-chain amino acids. Catalyzes the dehydration of (2R,3R)-2,3-dihydroxy-3-methylpentanoate (2,3-dihydroxy-3-methylvalerate) into 2-oxo-3-methylpentanoate (2-oxo-3-methylvalerate) and of (2R)-2,3-dihydroxy-3-methylbutanoate (2,3-dihydroxyisovalerate) into 2-oxo-3-methylbutanoate (2-oxoisovalerate), the penultimate precursor to L-isoleucine and L-valine, respectively. This is Dihydroxy-acid dehydratase from Geotalea daltonii (strain DSM 22248 / JCM 15807 / FRC-32) (Geobacter daltonii).